A 751-amino-acid chain; its full sequence is Palmitoyltransferase ZDHHC8B (751 aa).

The Cytoplasmic portion of the chain corresponds to methionine 1 to lysine 13. The helical transmembrane segment at tyrosine 14 to phenylalanine 34 threads the bilayer. Residues threonine 35–lysine 41 are Extracellular-facing. The chain crosses the membrane as a helical span at residues alanine 42 to phenylalanine 62. Residues serine 63–tyrosine 148 lie on the Cytoplasmic side of the membrane. The DHHC domain occupies lysine 104–leucine 154. Cysteine 134 serves as the catalytic S-palmitoyl cysteine intermediate. The chain crosses the membrane as a helical span at residues phenylalanine 149 to leucine 169. Residues phenylalanine 170–valine 185 are Extracellular-facing. A helical membrane pass occupies residues threonine 186–phenylalanine 206. Residues histidine 207–valine 751 lie on the Cytoplasmic side of the membrane. Disordered regions lie at residues arginine 293–proline 346, cysteine 437–threonine 461, arginine 633–arginine 659, arginine 666–tyrosine 685, and histidine 703–valine 736. Residues serine 326–serine 338 show a composition bias toward low complexity. 3 stretches are compositionally biased toward polar residues: residues arginine 633–histidine 651, valine 669–arginine 681, and glycine 724–histidine 733.

Belongs to the DHHC palmitoyltransferase family. ERF2/ZDHHC9 subfamily.

It localises to the golgi apparatus membrane. It is found in the mitochondrion membrane. It carries out the reaction L-cysteinyl-[protein] + hexadecanoyl-CoA = S-hexadecanoyl-L-cysteinyl-[protein] + CoA. In terms of biological role, palmitoyltransferase that catalyzes the addition of palmitate onto various protein substrates and therefore function in several unrelated biological processes. This Danio rerio (Zebrafish) protein is Palmitoyltransferase ZDHHC8B.